The primary structure comprises 276 residues: Hydroxyethylthiazole kinase (276 aa).

ATP contacts are provided by arginine 126 and serine 172. Position 199 (glycine 199) interacts with substrate.

Belongs to the Thz kinase family. Mg(2+) is required as a cofactor.

The catalysed reaction is 5-(2-hydroxyethyl)-4-methylthiazole + ATP = 4-methyl-5-(2-phosphooxyethyl)-thiazole + ADP + H(+). It participates in cofactor biosynthesis; thiamine diphosphate biosynthesis; 4-methyl-5-(2-phosphoethyl)-thiazole from 5-(2-hydroxyethyl)-4-methylthiazole: step 1/1. Its function is as follows. Catalyzes the phosphorylation of the hydroxyl group of 4-methyl-5-beta-hydroxyethylthiazole (THZ). The sequence is that of Hydroxyethylthiazole kinase from Burkholderia pseudomallei (strain 1106a).